The following is a 398-amino-acid chain: O-methyltransferase hmp5 (398 aa).

S-adenosyl-L-methionine-binding positions include 233–234, glutamate 261, and 283–284; these read GG and DF. Catalysis depends on histidine 303, which acts as the Proton acceptor.

Belongs to the class I-like SAM-binding methyltransferase superfamily. Cation-independent O-methyltransferase family.

Its pathway is secondary metabolite biosynthesis. In terms of biological role, O-methyltransferase; part of the gene cluster that mediates the biosynthesis of hypothemycin, a resorcylic acid lactone (RAL) that irreversibly inhibits a subset of protein kinases with a conserved cysteine in the ATP binding site such as human ERK2. The first step is performed by both PKSs hmp3 and hmp8 and leads to the production of 7',8'-dehydrozearalenol (DHZ). The highly reducing PKS hpm8 synthesizes the reduced hexaketide (7S,11S,2E,8E)-7,11-dihydroxy-dodeca-2,8-dienoate, which is transferred downstream to the non-reducing PKS hpm3. Hpm3 then extends the reduced hexaketide to a nonaketide, after which regioselective cyclization and macrolactonization affords DHZ. The next step is the conversion of DHZ into aigialomycin C and is performed by the O-methyltransferase hmp5, the FAD-binding monooxygenase hmp7, and the cytochrome P450 monooxygenase hmp1. The wide substrate tolerance of the hmp5 and hmp7 implies that the reactions from DHZ to aigialomycin C can occur in any order. The steps from aigialomycin C to hypothemycin are less well established. The FAD-linked oxidoreductase hmp9 presumably catalyzes oxidation of the C-6' hydroxyl to a ketone. The timing of this oxidation is important, since the resulting enone functional group is a Michael acceptor that can react spontaneously with glutathione, an abundant metabolite in fungal cells. The glutathione S-transferase hmp2 catalyzes cis-trans isomerization of the 7',8' double bond with equilibrium favoring the trans isomer. The hpm6-encoded transporter might preferentially pump hypothemycin out of the cell relative to the trans isomer aigialomycin A. The cis-to-trans isomerization may be coupled with C-4' hydroxylation, since all known hypothemycin analogs containing the enone functional group also have hydroxyl groups at both C-4' and C-5'. The sequence is that of O-methyltransferase hmp5 from Hypomyces subiculosus (Nectria subiculosa).